The following is a 3535-amino-acid chain: Lysosomal-trafficking regulator (3535 aa).

Residues 412–436 (MESSASTAMPKQQQHPRHKRQRSSQ) form a disordered region. One copy of the WD 1 repeat lies at 689–736 (TLSRRLIQLQLNSSDRASQLFQALLYKCSKHSRAKFWLDESSTPAKLE). Residues 1066–1096 (STHQEPTGVVNSPSGDSQQPRPRARSFNSGS) are compositionally biased toward polar residues. Disordered regions lie at residues 1066 to 1132 (STHQ…NAGV) and 1592 to 1613 (GEGQ…TLDG). Residues 1596 to 1610 (PTGRSPGSSSSSRST) are compositionally biased toward low complexity. The BEACH-type PH domain occupies 2686 to 2784 (SLNSQILYNF…MREVFCDKIV (99 aa)). The region spanning 2784 to 3081 (VATPDQSKVI…QLFKSPHPAS (298 aa)) is the BEACH domain. The disordered stretch occupies residues 3254 to 3287 (GIGGGGSERVDEAGNLHPTSSASSVNSSSISSGG). Positions 3273-3285 (SSASSVNSSSISS) are enriched in low complexity. WD repeat units follow at residues 3307 to 3346 (RHTD…YVRT), 3442 to 3486 (VHED…FVSE), and 3489 to 3527 (TGTS…GNAP).

In terms of assembly, interacts with Rab5; the interaction is independent of GDP or GTP. Interacts with msps.

The protein resides in the vesicle. Its subcellular location is the cytoplasm. It localises to the cytoskeleton. The protein localises to the spindle. It is found in the spindle pole. Functionally, adapter protein that regulates intracellular membrane fusion reactions. Regulates the fusion of lysosome-related organelles. Promotes microtubules nucleation and centrosomal recruitment of microtubule nucleating proteins such as msps. In syncytial embryos, during the formation of yolk granules, suppresses vesicle fusion events with lipid droplets, possibly via interaction with Rab5. In the eye, regulates pigment granules size. In hemocytes, required for the late steps of bacteria phagocytosis. In fat body, required for autophagosome maturation. The sequence is that of Lysosomal-trafficking regulator from Drosophila melanogaster (Fruit fly).